A 166-amino-acid polypeptide reads, in one-letter code: EEF1A lysine methyltransferase 1 (166 aa).

It belongs to the class I-like SAM-binding methyltransferase superfamily. EFM5 family.

It is found in the cytoplasm. It catalyses the reaction L-lysyl-[protein] + 3 S-adenosyl-L-methionine = N(6),N(6),N(6)-trimethyl-L-lysyl-[protein] + 3 S-adenosyl-L-homocysteine + 3 H(+). Its function is as follows. Protein-lysine methyltransferase that selectively catalyzes the trimethylation of EEF1A at 'Lys-79'. This chain is EEF1A lysine methyltransferase 1, found in Danio rerio (Zebrafish).